Consider the following 4235-residue polypeptide: Tenellin synthetase (4235 aa).

Positions 15–455 (SEPIAIVGSA…GTNAHAIIER (441 aa)) constitute a Ketosynthase family 3 (KS3) domain. Active-site for beta-ketoacyl synthase activity residues include Cys189, His326, and His375. The interval 590–924 (IFTGQGAQWP…ANDAVAFSTA (335 aa)) is malonyl-CoA:ACP transacylase (MAT) domain. An N-terminal hotdog fold region spans residues 993–1135 (HELLGRRMPD…GRIAVHLGAK (143 aa)). Residues 993–1310 (HELLGRRMPD…GFEVRAVGEP (318 aa)) are dehydratase (DH) domain. Residues 993–1313 (HELLGRRMPD…VRAVGEPDAS (321 aa)) form the PKS/mFAS DH domain. His1025 (proton acceptor; for dehydratase activity) is an active-site residue. The interval 1158 to 1313 (LQQLDCEKLY…VRAVGEPDAS (156 aa)) is C-terminal hotdog fold. The Proton donor; for dehydratase activity role is filled by Asp1217. Residues 1459-1652 (RLYTEDKGMH…FSGVDHIVHD (194 aa)) are methyltransferase (MT) domain. The ketoreductase (KR) domain stretch occupies residues 2208–2381 (TYLMVGAAGG…AASIIHVGHV (174 aa)). In terms of domain architecture, Carrier 1 spans 2500–2580 (EAAAAALKGF…QLSALAAKLA (81 aa)). An O-(pantetheine 4'-phosphoryl)serine modification is found at Ser2540. The tract at residues 2587 to 2709 (RAQLEEASGN…EISSNGFFTQ (123 aa)) is disordered. Residues 2605–2619 (NDKETGPSKKGKAQE) are compositionally biased toward basic and acidic residues. Composition is skewed to polar residues over residues 2645 to 2659 (GGSS…SSVS) and 2666 to 2678 (QEST…NNGE). Over residues 2679 to 2695 (STPSKSSNCNSDSGSDN) the composition is skewed to low complexity. The tract at residues 2720-3163 (REAPMSPAQS…TAQSVGDCVV (444 aa)) is condensation (C) domain. Positions 3197–3609 (CQQHSTKSAI…DGTLLCFGRI (413 aa)) are adenylation (A) (KR) domain. The disordered stretch occupies residues 3724-3750 (DEAAAATSPSNDNNNNNTPSGGGGEKM). Residues 3726-3742 (AAAATSPSNDNNNNNTP) are compositionally biased toward low complexity. The region spanning 3748–3833 (EKMTVRQGEL…GMARCVAEQR (86 aa)) is the Carrier 2 domain. Position 3793 is an O-(pantetheine 4'-phosphoryl)serine (Ser3793). The interval 3860-3889 (EKLQHSSASSSSSSSSSSAGSSSTQRPRKT) is disordered. Positions 3865–3882 (SSASSSSSSSSSSAGSSS) are enriched in low complexity. A reductase (RED) domain region spans residues 3896 to 4141 (LTGATGFLGG…LDFGQVDKVV (246 aa)).

This sequence in the C-terminal section; belongs to the NRP synthetase family.

It functions in the pathway secondary metabolite biosynthesis. In terms of biological role, hybrid PKS-NRPS synthetase; part of the gene cluster that mediates the biosynthesis of tenellin-type 2-pyridones, iron-chelating compounds involved in iron stress tolerance, competition with the natural competitor fungus Metarhizium robertsii and insect hosts infection. TenS catalyzes the assembly of the polyketide-amino acid backbone. Because tenS lacks a designated enoylreductase (ER) domain, the required activity is provided the enoyl reductase tenC. Upon formation of the polyketide backbone on the thiotemplate, the triketide is transferred to the NRPS module and linked to tyrosine to produce the pyrrolidine-2-dione intermediates, including pretellinin A, 11-hydropretellenin A, 12-hydropretellenin A, 13-hydropretellenin A, 14-hydropretellenin A, 12-oxopretellenin A and prototellinin D. The pathway begins with the assembly of the polyketide-amino acid backbone by the hybrid PKS-NRPS tenS with the help of the enoyl reductase tenC. These enzymes catalyze the synthesis of the pyrrolidine-2-dione intermediates pretellinin A, 11-hydropretellenin A, 12-hydropretellenin A, 13-hydropretellenin A, 14-hydropretellenin A, 12-oxopretellenin A and prototellinin D. The cytochrome P450 monooxygenase tenA then catalyzes an oxidative ring expansion of pretenellin A and 14-hydropretellenin A to form the 2-pyridone core, leading to pretenellin B and pyridovericin, respectively. The cytochrome P450 monooxygenase tenB is then required for the selective N-hydroxylation of the 2-pyridone nitrogen of yield tellinin and 15-hydroxytellenin (15-HT), respectively. The UDP-glucosyltransferase GT1 and the methyltransferase MT1, located outside the tenS gene cluster, contribute to the stepwise glycosylation and methylation of 15-HT to obtain the glycoside pyridovericin-N-O-(4-O-methyl-beta-D-glucopyranoside) (PMGP). Additional related compounds such as 1-O-methyl-15-HT, (8Z)-1-O-methyl-15-HT, and O-methyltenellin A are also produced but the enzymes involved in their biosynthesis have still to be determined. The polypeptide is Tenellin synthetase (Beauveria bassiana (strain ARSEF 2860) (White muscardine disease fungus)).